The primary structure comprises 332 residues: 4-hydroxythreonine-4-phosphate dehydrogenase (332 aa).

Substrate is bound by residues His138 and Thr139. Residues His168, His213, and His269 each contribute to the a divalent metal cation site. The substrate site is built by Lys277, Asn286, and Arg295.

It belongs to the PdxA family. In terms of assembly, homodimer. It depends on Zn(2+) as a cofactor. Mg(2+) is required as a cofactor. Requires Co(2+) as cofactor.

It localises to the cytoplasm. It carries out the reaction 4-(phosphooxy)-L-threonine + NAD(+) = 3-amino-2-oxopropyl phosphate + CO2 + NADH. It functions in the pathway cofactor biosynthesis; pyridoxine 5'-phosphate biosynthesis; pyridoxine 5'-phosphate from D-erythrose 4-phosphate: step 4/5. Catalyzes the NAD(P)-dependent oxidation of 4-(phosphooxy)-L-threonine (HTP) into 2-amino-3-oxo-4-(phosphooxy)butyric acid which spontaneously decarboxylates to form 3-amino-2-oxopropyl phosphate (AHAP). This is 4-hydroxythreonine-4-phosphate dehydrogenase from Vibrio parahaemolyticus serotype O3:K6 (strain RIMD 2210633).